The following is a 59-amino-acid chain: Metallothionein-1B (59 aa).

Positions 1–29 (MPGPCCNDKCVCQEGGCKAGCQCTSCRCS) are beta. 17 residues coordinate a divalent metal cation: C5, C6, C10, C17, C21, C23, C26, C28, C31, C34, C38, C40, C46, C50, C54, C56, and C57. The interval 30–59 (PCQKCTSGCKCATKEECSKTCTKPCSCCPK) is alpha.

Belongs to the metallothionein superfamily. Type 3 family.

Its function is as follows. Binds six divalent metal ions. Known to bind copper and cadmium. The sequence is that of Metallothionein-1B from Callinectes sapidus (Blue crab).